The following is a 337-amino-acid chain: Monoacylglycerol lipase abhd6-B (337 aa).

Residues 1 to 19 (MDIDVLNMFLVAGGTLLVP) lie on the Extracellular side of the membrane. A helical; Signal-anchor for type II membrane protein transmembrane segment spans residues 20–42 (LLAFMTSFLLWPAALIRIYYWYW). At 43–337 (RRALGMQVKY…QSTDNHKKHD (295 aa)) the chain is on the cytoplasmic side. The AB hydrolase-1 domain maps to 72-313 (PSVLMLHGFS…CGHSVVMERP (242 aa)). S148 functions as the Nucleophile in the catalytic mechanism. Active-site charge relay system residues include D278 and H306.

Belongs to the AB hydrolase superfamily.

Its subcellular location is the late endosome membrane. It localises to the lysosome membrane. The protein resides in the mitochondrion membrane. It catalyses the reaction Hydrolyzes glycerol monoesters of long-chain fatty acids.. The enzyme catalyses 1-octanoylglycerol + H2O = octanoate + glycerol + H(+). The catalysed reaction is 1-decanoylglycerol + H2O = decanoate + glycerol + H(+). It carries out the reaction 1-dodecanoylglycerol + H2O = dodecanoate + glycerol + H(+). It catalyses the reaction 1-tetradecanoylglycerol + H2O = tetradecanoate + glycerol + H(+). The enzyme catalyses 2-hexadecanoylglycerol + H2O = glycerol + hexadecanoate + H(+). The catalysed reaction is 2-(9Z-octadecenoyl)-glycerol + H2O = glycerol + (9Z)-octadecenoate + H(+). It carries out the reaction 1-(9Z-octadecenoyl)-glycerol + H2O = glycerol + (9Z)-octadecenoate + H(+). It catalyses the reaction 2-(9Z,12Z-octadecadienoyl)-glycerol + H2O = (9Z,12Z)-octadecadienoate + glycerol + H(+). The enzyme catalyses 2-(5Z,8Z,11Z,14Z-eicosatetraenoyl)-glycerol + H2O = glycerol + (5Z,8Z,11Z,14Z)-eicosatetraenoate + H(+). The catalysed reaction is 1-(5Z,8Z,11Z,14Z-eicosatetraenoyl)-glycerol + H2O = glycerol + (5Z,8Z,11Z,14Z)-eicosatetraenoate + H(+). It carries out the reaction 1-(9Z,12Z-octadecadienoyl)-glycerol + H2O = (9Z,12Z)-octadecadienoate + glycerol + H(+). It catalyses the reaction 3-(9Z-octadecenoyl)-sn-glycero-1-phospho-(3'-(9Z-octadecenoyl)-1'-sn-glycerol) + H2O = 3-(9Z-octadecenoyl)-sn-glycero-1-phospho-(1'-sn-glycerol) + (9Z)-octadecenoate + H(+). The enzyme catalyses (S,S)-2-(9Z-octadecenoyl)-sn-glycero-1-phospho-(2'-(9Z-octadecenoyl)-1'-sn-glycerol) + H2O = (S,S)-2-(9Z-octadecenoyl)-sn-glycero-1-phospho-(1'-sn-glycerol) + (9Z)-octadecenoate + H(+). The catalysed reaction is (R,R)-2-(9Z-octadecenoyl)-sn-glycero-3-phospho-(2'-(9Z-octadecenoyl)-3'-sn-glycerol) + H2O = (R,R)-2-(9Z-octadecenoyl)-sn-glycero-3-phospho-(3'-sn-glycerol) + (9Z)-octadecenoate + H(+). In terms of biological role, lipase that preferentially hydrolysis medium-chain saturated monoacylglycerols including 2-arachidonoylglycerol. Through 2-arachidonoylglycerol degradation may regulate endocannabinoid signaling pathways. Also has a lysophosphatidyl lipase activity with a preference for lysophosphatidylglycerol among other lysophospholipids. Also able to degrade bis(monoacylglycero)phosphate (BMP) and constitutes the major enzyme for BMP catabolism. BMP, also known as lysobisphosphatidic acid, is enriched in late endosomes and lysosomes and plays a key role in the formation of intraluminal vesicles and in lipid sorting. This chain is Monoacylglycerol lipase abhd6-B (abhd6-b), found in Xenopus laevis (African clawed frog).